The primary structure comprises 360 residues: Histidinol-phosphate aminotransferase (360 aa).

An N6-(pyridoxal phosphate)lysine modification is found at K224.

It belongs to the class-II pyridoxal-phosphate-dependent aminotransferase family. Histidinol-phosphate aminotransferase subfamily. Pyridoxal 5'-phosphate is required as a cofactor.

The enzyme catalyses L-histidinol phosphate + 2-oxoglutarate = 3-(imidazol-4-yl)-2-oxopropyl phosphate + L-glutamate. It participates in amino-acid biosynthesis; L-histidine biosynthesis; L-histidine from 5-phospho-alpha-D-ribose 1-diphosphate: step 7/9. The sequence is that of Histidinol-phosphate aminotransferase from Methanococcoides burtonii (strain DSM 6242 / NBRC 107633 / OCM 468 / ACE-M).